The chain runs to 106 residues: Pyrimidine/purine nucleoside phosphorylase (106 aa).

It belongs to the nucleoside phosphorylase PpnP family.

It carries out the reaction a purine D-ribonucleoside + phosphate = a purine nucleobase + alpha-D-ribose 1-phosphate. It catalyses the reaction adenosine + phosphate = alpha-D-ribose 1-phosphate + adenine. The enzyme catalyses cytidine + phosphate = cytosine + alpha-D-ribose 1-phosphate. The catalysed reaction is guanosine + phosphate = alpha-D-ribose 1-phosphate + guanine. It carries out the reaction inosine + phosphate = alpha-D-ribose 1-phosphate + hypoxanthine. It catalyses the reaction thymidine + phosphate = 2-deoxy-alpha-D-ribose 1-phosphate + thymine. The enzyme catalyses uridine + phosphate = alpha-D-ribose 1-phosphate + uracil. The catalysed reaction is xanthosine + phosphate = alpha-D-ribose 1-phosphate + xanthine. In terms of biological role, catalyzes the phosphorolysis of diverse nucleosides, yielding D-ribose 1-phosphate and the respective free bases. Can use uridine, adenosine, guanosine, cytidine, thymidine, inosine and xanthosine as substrates. Also catalyzes the reverse reactions. The sequence is that of Pyrimidine/purine nucleoside phosphorylase from Burkholderia ambifaria (strain MC40-6).